We begin with the raw amino-acid sequence, 161 residues long: Endoribonuclease YbeY (161 aa).

Residues His-127, His-131, and His-137 each coordinate Zn(2+).

The protein belongs to the endoribonuclease YbeY family. The cofactor is Zn(2+).

The protein localises to the cytoplasm. Its function is as follows. Single strand-specific metallo-endoribonuclease involved in late-stage 70S ribosome quality control and in maturation of the 3' terminus of the 16S rRNA. The protein is Endoribonuclease YbeY of Listeria welshimeri serovar 6b (strain ATCC 35897 / DSM 20650 / CCUG 15529 / CIP 8149 / NCTC 11857 / SLCC 5334 / V8).